The chain runs to 599 residues: MSDLSHIRNFSIIAHIDHGKSTLADRFIQMCGGLAAREMEAQVLDSMDLERERGITIKAHSVTLHYKAKDGKTYQLNFIDTPGHVDFTYEVSRSLAACEGALLVVDAGQGVEAQSVANCYTAIEQGLEVMPVLNKMDLPQADPDRVKDEIEKIIGIDATDAVACSAKSGMGVDEVLERLVQTIPAPTGDIEAPLQALIIDSWFDNYLGVVSLVRVRQGRVKKGDKILVKSTGKVHLVDSVGVFTPKHTATADLKAGEVGFIIASIKDIHGAPVGDTLTLSSTPEVEVLPGFKKIQPQVYAGLFPVSSDDFEDFRDALQKLTLNDSSLQYMPESSDALGFGFRCGFLGMLHMEIIQERLEREYDLDLITTAPSVIYELELKTGETITVDNPSKLPDVSSVADFREPIVTATILVPQEHLGNVITLCIEKRGVQRDMQFLGSQVQVRYDLPMNEVVLDFFDRLKSTSRGYASLDYHFDRYQSANLVKLDVLINGDKVDALALIVHRDNAAYKGRALTEKMKELIPRQMFDVAIQAAIGGQIIARTTVKALRKNVLAKCYGGDVSRKKKLLEKQKAGKKRMKQVGNVEIPQEAFLAVLRLDS.

The 183-residue stretch at 5-187 (SHIRNFSIIA…RLVQTIPAPT (183 aa)) folds into the tr-type G domain. Residues 17–22 (DHGKST) and 134–137 (NKMD) each bind GTP.

The protein belongs to the TRAFAC class translation factor GTPase superfamily. Classic translation factor GTPase family. LepA subfamily.

The protein resides in the cell inner membrane. It catalyses the reaction GTP + H2O = GDP + phosphate + H(+). In terms of biological role, required for accurate and efficient protein synthesis under certain stress conditions. May act as a fidelity factor of the translation reaction, by catalyzing a one-codon backward translocation of tRNAs on improperly translocated ribosomes. Back-translocation proceeds from a post-translocation (POST) complex to a pre-translocation (PRE) complex, thus giving elongation factor G a second chance to translocate the tRNAs correctly. Binds to ribosomes in a GTP-dependent manner. This chain is Elongation factor 4, found in Ectopseudomonas mendocina (strain ymp) (Pseudomonas mendocina).